Reading from the N-terminus, the 1032-residue chain is Unconventional myosin-Ih (1032 aa).

The Myosin motor domain occupies 12-701 (GVQDFVLLDA…TLFATEDAFE (690 aa)). Position 105 to 112 (105 to 112 (GESGAGKT)) interacts with ATP. Phosphoserine is present on S365. Residues 578-600 (LSSLLETLISKEPSYIRCIKPND) are actin-binding. IQ domains are found at residues 704 to 726 (KHQL…EYVK) and 727 to 756 (KRQA…AVRI). Positions 855–1029 (KDGYTESLNQ…NGQLTVVSVR (175 aa)) constitute a TH1 domain.

It belongs to the TRAFAC class myosin-kinesin ATPase superfamily. Myosin family.

Myosins are actin-based motor molecules with ATPase activity. Unconventional myosins serve in intracellular movements. Their highly divergent tails are presumed to bind to membranous compartments, which would be moved relative to actin filaments. The protein is Unconventional myosin-Ih (MYO1H) of Homo sapiens (Human).